The sequence spans 330 residues: MKIAVLGGGSWGTALAHLLAGKGEDVRLWVRDPAVVEGVNRDHENPRYLKGLHLHEALRATCDAGEALEGADILLSVVPCQQTRTVLRSLRPRLKTGMVVVSASKGIETDGLRTVGEMVEDELAGLAPRYAVISGPSFAAEVVAGMPTAVVLGCADRDLGGTLREVFSTPTFRTYSCTDVRGVELGGAVKNVIAIAAGLSDGLGFGSNARAGLITRGLAEMGRLGVALGARGSTFMGLSGLGDLVLTCTGDLSRNRQVGLRLAEGQGLDAIVAGMGMVAEGVKTTEAVYELAQREGVDLPITQAMYAVLHDGRDPRDMVQELMTRELREE.

4 residues coordinate NADPH: Ser-10, Trp-11, Arg-31, and Lys-105. Sn-glycerol 3-phosphate-binding residues include Lys-105, Gly-135, and Ser-137. Ala-139 is a binding site for NADPH. Positions 190, 243, 253, 254, and 255 each coordinate sn-glycerol 3-phosphate. The active-site Proton acceptor is Lys-190. Arg-254 contacts NADPH. 2 residues coordinate NADPH: Val-278 and Glu-280.

It belongs to the NAD-dependent glycerol-3-phosphate dehydrogenase family.

Its subcellular location is the cytoplasm. The enzyme catalyses sn-glycerol 3-phosphate + NAD(+) = dihydroxyacetone phosphate + NADH + H(+). The catalysed reaction is sn-glycerol 3-phosphate + NADP(+) = dihydroxyacetone phosphate + NADPH + H(+). It participates in membrane lipid metabolism; glycerophospholipid metabolism. Its function is as follows. Catalyzes the reduction of the glycolytic intermediate dihydroxyacetone phosphate (DHAP) to sn-glycerol 3-phosphate (G3P), the key precursor for phospholipid synthesis. The chain is Glycerol-3-phosphate dehydrogenase [NAD(P)+] from Nitratidesulfovibrio vulgaris (strain ATCC 29579 / DSM 644 / CCUG 34227 / NCIMB 8303 / VKM B-1760 / Hildenborough) (Desulfovibrio vulgaris).